Reading from the N-terminus, the 226-residue chain is Transcription factor bHLH115 (226 aa).

Residues 66–117 form the bHLH domain; sequence TGSNSKACREKQRRDRLNDKFTELSSVLEPGRTPKTDKVAIINDAIRMVNQA.

As to quaternary structure, homodimer. Interacts with BTS and BHLH47/PYE.

The protein localises to the nucleus. The protein is Transcription factor bHLH115 (BHLH115) of Arabidopsis thaliana (Mouse-ear cress).